We begin with the raw amino-acid sequence, 494 residues long: Probable capsid protein (494 aa).

The short motif at 120-123 is the Nuclear localization signal element; the sequence is RPKR. The CCHC-type zinc finger occupies 418-435; that stretch reads CRCWVCNIEGHYANECPN. A disordered region spans residues 474–494; it reads LSSSDSELDDTCEESSSEESE. Residues 479 to 494 are compositionally biased toward acidic residues; sequence SELDDTCEESSSEESE.

Belongs to the caulimoviridae capsid protein family. Interacts (via nuclear localization signal) with host importin alpha.

Its subcellular location is the virion. It localises to the host nucleus. In terms of biological role, self assembles to form an icosahedral capsid, about 50 nm in diameter, nm, composed of 420 subunits of the viral capsid protein. The capsid encapsulates the genomic dsDNA. Following virus entry into host cell, provides nuclear import of the viral genome. Virus particles do not enter the nucleus, but dock at the nuclear membrane through the interaction with host importins. The sequence is that of Probable capsid protein from Dianthus caryophyllus (Carnation).